The primary structure comprises 118 residues: Small ribosomal subunit protein uS13 (118 aa).

Positions 94-118 (GLPVRGQRTKTNARTRKGPRKPIRK) are disordered.

It belongs to the universal ribosomal protein uS13 family. In terms of assembly, part of the 30S ribosomal subunit. Forms a loose heterodimer with protein S19. Forms two bridges to the 50S subunit in the 70S ribosome.

Located at the top of the head of the 30S subunit, it contacts several helices of the 16S rRNA. In the 70S ribosome it contacts the 23S rRNA (bridge B1a) and protein L5 of the 50S subunit (bridge B1b), connecting the 2 subunits; these bridges are implicated in subunit movement. Contacts the tRNAs in the A and P-sites. This chain is Small ribosomal subunit protein uS13, found in Pseudomonas aeruginosa (strain LESB58).